Reading from the N-terminus, the 391-residue chain is Sulfate adenylyltransferase (391 aa).

This sequence belongs to the sulfate adenylyltransferase family.

The enzyme catalyses sulfate + ATP + H(+) = adenosine 5'-phosphosulfate + diphosphate. It functions in the pathway sulfur metabolism; hydrogen sulfide biosynthesis; sulfite from sulfate: step 1/3. This is Sulfate adenylyltransferase from Lactiplantibacillus plantarum (strain ATCC BAA-793 / NCIMB 8826 / WCFS1) (Lactobacillus plantarum).